Consider the following 439-residue polypeptide: MNLTPKEIVKFLDDYVIGQKKAKKIIAIALRNRYRRMQLSPELQDDIVPKNILMIGSTGVGKTEIARRLAKMMGFPFIKIEASKYTEVGFVGRDVESMVRDLTNAALNLVKNEQREKNKDKINEFIENKILEKLLPPLPKGISDEKQEEYKNSLEKMRTKLRNGDLDESTIEIEISQNMFDTNPNLPPEMGAMQDIVKVIGVGSKKVKKEMKIKDAKNALKNEAGEKILDQESIKSEALKRSENEGIIFIDEIDKIAVSSGNSNRQDPSKEGVQRDLLPIVEGSNVQTKIGTLKTDHILFIAAGAFHLSKPSDLIPELQGRFPLRVELDSLDDKAFYEILTRPKNSLLKQYSQLLKTENLELDFDNEAIKEIAKIASRANEEMQDIGARRLHTVIEKLLEDLSFEADEYAGKKFVVDKKMVEEKLGDIIENKDLARYIL.

Residues Ile17, 59-64 (GVGKTE), Asp251, Glu317, and Arg389 contribute to the ATP site.

The protein belongs to the ClpX chaperone family. HslU subfamily. As to quaternary structure, a double ring-shaped homohexamer of HslV is capped on each side by a ring-shaped HslU homohexamer. The assembly of the HslU/HslV complex is dependent on binding of ATP.

It is found in the cytoplasm. Functionally, ATPase subunit of a proteasome-like degradation complex; this subunit has chaperone activity. The binding of ATP and its subsequent hydrolysis by HslU are essential for unfolding of protein substrates subsequently hydrolyzed by HslV. HslU recognizes the N-terminal part of its protein substrates and unfolds these before they are guided to HslV for hydrolysis. The chain is ATP-dependent protease ATPase subunit HslU from Campylobacter jejuni subsp. doylei (strain ATCC BAA-1458 / RM4099 / 269.97).